A 138-amino-acid chain; its full sequence is Small ribosomal subunit protein uS11c (138 aa).

The interval Met1–Asn21 is disordered. Positions Gly9 to Asn21 are enriched in basic residues.

This sequence belongs to the universal ribosomal protein uS11 family. In terms of assembly, part of the 30S ribosomal subunit.

Its subcellular location is the plastid. The protein localises to the chloroplast. The chain is Small ribosomal subunit protein uS11c from Calycanthus floridus var. glaucus (Eastern sweetshrub).